We begin with the raw amino-acid sequence, 218 residues long: Glutathione S-transferase (218 aa).

Residues 2 to 88 (PVTLGYWDIR…YIARKHDLCG (87 aa)) enclose the GST N-terminal domain. Residues 7–8 (YW), 46–50 (WLNEK), 59–60 (NL), and 72–73 (QS) contribute to the glutathione site. One can recognise a GST C-terminal domain in the interval 90-208 (TEEERIQLDI…KSSRFSCKQI (119 aa)). Residue Tyr116 coordinates substrate.

This sequence belongs to the GST superfamily. Mu family. As to quaternary structure, homodimer.

The protein localises to the cytoplasm. It catalyses the reaction RX + glutathione = an S-substituted glutathione + a halide anion + H(+). Its function is as follows. Conjugation of reduced glutathione to a wide number of exogenous and endogenous hydrophobic electrophiles. In Mesocricetus auratus (Golden hamster), this protein is Glutathione S-transferase.